The chain runs to 305 residues: MAQVKRIRRNVSGIILLDKPLGFTSNAALQKVRWLLNAEKAGHTGSLDPLATGVLPLCFGEATKFSQYLLDSDKGYETLAQLGKTTTTADAEGEVLQERPVTVGQADIEAVLPKFRGQISQIPPMYSALKRDGQPLYKLARAGEVVEREPRSVTIARLELLAFEGDTARLAVDCSKGTYIRTLVEDIGEQLGCGAYVAELRRTQAGPFTLAQTVTLEELEAVHAEGGNEAVDRFLMPSDSGLQDWPLLQFSEASAFYWLNGQPVRAPDAPKFGMVRVQDHNGRFIGIGEVSEDGRIAPRRLIRSE.

The active-site Nucleophile is D48.

Belongs to the pseudouridine synthase TruB family. Type 1 subfamily.

The enzyme catalyses uridine(55) in tRNA = pseudouridine(55) in tRNA. In terms of biological role, responsible for synthesis of pseudouridine from uracil-55 in the psi GC loop of transfer RNAs. The chain is tRNA pseudouridine synthase B from Pseudomonas fluorescens (strain Pf0-1).